Here is a 225-residue protein sequence, read N- to C-terminus: Riboflavin kinase (225 aa).

Residues 1 to 89 form a unknown region; the sequence is MPDIKYLKKL…SRIFSPDLDI (89 aa). The interval 90–225 is riboflavin kinase; it reads LELEGKVLKG…LKKQGTENQK (136 aa). 99–104 provides a ligand contact to CDP; the sequence is GLGEGQ. Threonine 128 and asparagine 130 together coordinate Mg(2+). FMN-binding residues include threonine 185 and glutamate 193. Position 198–201 (198–201) interacts with CDP; sequence IKLR.

This sequence belongs to the archaeal riboflavin kinase family. Mg(2+) is required as a cofactor.

The catalysed reaction is riboflavin + CTP = CDP + FMN + H(+). The protein operates within cofactor biosynthesis; FMN biosynthesis; FMN from riboflavin (CTP route): step 1/1. Catalyzes the CTP-dependent phosphorylation of riboflavin (vitamin B2) to form flavin mononucleotide (FMN). The chain is Riboflavin kinase (ribK) from Methanosarcina barkeri (strain Fusaro / DSM 804).